The sequence spans 197 residues: Pyridoxal 5'-phosphate synthase subunit PdxT (197 aa).

54–56 (GES) is an L-glutamine binding site. The active-site Nucleophile is the C86. L-glutamine-binding positions include R113 and 141–142 (IR). Catalysis depends on charge relay system residues H177 and E179.

This sequence belongs to the glutaminase PdxT/SNO family. In the presence of PdxS, forms a dodecamer of heterodimers. Only shows activity in the heterodimer.

It carries out the reaction aldehydo-D-ribose 5-phosphate + D-glyceraldehyde 3-phosphate + L-glutamine = pyridoxal 5'-phosphate + L-glutamate + phosphate + 3 H2O + H(+). The enzyme catalyses L-glutamine + H2O = L-glutamate + NH4(+). Its pathway is cofactor biosynthesis; pyridoxal 5'-phosphate biosynthesis. In terms of biological role, catalyzes the hydrolysis of glutamine to glutamate and ammonia as part of the biosynthesis of pyridoxal 5'-phosphate. The resulting ammonia molecule is channeled to the active site of PdxS. In Haloarcula marismortui (strain ATCC 43049 / DSM 3752 / JCM 8966 / VKM B-1809) (Halobacterium marismortui), this protein is Pyridoxal 5'-phosphate synthase subunit PdxT.